Consider the following 140-residue polypeptide: Seminal plasma protein A3 (140 aa).

The signal sequence occupies residues 1-25 (MALRLGLFLIWAGVSMFLQLDPVNG). Fibronectin type-II domains are found at residues 49–93 (TKDN…YCTK) and 94–140 (NDYA…WKYC). 4 disulfide bridges follow: Cys54-Cys78, Cys68-Cys91, Cys99-Cys125, and Cys113-Cys140.

The protein belongs to the seminal plasma protein family.

Its subcellular location is the secreted. In terms of biological role, the BSP-A proteins from seminal plasma exhibit both simulatory and inhibitory actions on the release of pituitary gonadotropins. The exact function of these proteins is not known. The protein is Seminal plasma protein A3 of Bos taurus (Bovine).